Consider the following 144-residue polypeptide: MGRVRTKTVKKSSRQVIERYYSKMTLDFHTNKKILEEVAIIPSKRLRNKIAGFSTHLMKRIQKGPVRGISLKLQEEERERRMDFVPDESAIKTDLIEVDKETLDMLSALGMSDLPGVVKQAAEPQAVAALPSYGRGGGGFGRKY.

Belongs to the eukaryotic ribosomal protein eS17 family.

This chain is Small ribosomal subunit protein eS17 (RPS17), found in Solanum lycopersicum (Tomato).